The sequence spans 113 residues: MAGPGAAFRRLGALSGAGALGLASYGAHGAQFPDAYGKELFDKTNKHHFLHSLALLAVPLCRKPLWAGLLLASGTTLFCTTFYYQALSGDPSFQNLAPVGGSLLLLGWLALAL.

A signal peptide spans 1-29 (MAGPGAAFRRLGALSGAGALGLASYGAHG). The Extracellular segment spans residues 30–63 (AQFPDAYGKELFDKTNKHHFLHSLALLAVPLCRK). N6-acetyllysine is present on Lys-43. A helical transmembrane segment spans residues 64–84 (PLWAGLLLASGTTLFCTTFYY). At 85–92 (QALSGDPS) the chain is on the cytoplasmic side. A helical membrane pass occupies residues 93 to 113 (FQNLAPVGGSLLLLGWLALAL).

The protein belongs to the TMEM256 family.

The protein resides in the membrane. The protein is Transmembrane protein 256 (TMEM256) of Bos taurus (Bovine).